Consider the following 126-residue polypeptide: Aspartate 1-decarboxylase (126 aa).

Ser25 functions as the Schiff-base intermediate with substrate; via pyruvic acid in the catalytic mechanism. Pyruvic acid (Ser) is present on Ser25. Thr57 provides a ligand contact to substrate. The active-site Proton donor is Tyr58. 72–74 (GAA) is a binding site for substrate.

The protein belongs to the PanD family. As to quaternary structure, heterooctamer of four alpha and four beta subunits. The cofactor is pyruvate. Post-translationally, is synthesized initially as an inactive proenzyme, which is activated by self-cleavage at a specific serine bond to produce a beta-subunit with a hydroxyl group at its C-terminus and an alpha-subunit with a pyruvoyl group at its N-terminus.

Its subcellular location is the cytoplasm. It carries out the reaction L-aspartate + H(+) = beta-alanine + CO2. The protein operates within cofactor biosynthesis; (R)-pantothenate biosynthesis; beta-alanine from L-aspartate: step 1/1. Catalyzes the pyruvoyl-dependent decarboxylation of aspartate to produce beta-alanine. This is Aspartate 1-decarboxylase from Campylobacter jejuni subsp. jejuni serotype O:6 (strain 81116 / NCTC 11828).